The following is a 1228-amino-acid chain: Nitrate reductase alpha chain (1228 aa).

Residues Asp47–Leu111 enclose the 4Fe-4S Mo/W bis-MGD-type domain. The [4Fe-4S] cluster site is built by His54, Cys58, Cys62, and Cys97. Mo-bis(molybdopterin guanine dinucleotide) is bound at residue Asp227.

This sequence belongs to the prokaryotic molybdopterin-containing oxidoreductase family. [4Fe-4S] cluster is required as a cofactor. Mo-bis(molybdopterin guanine dinucleotide) serves as cofactor.

The protein localises to the cell membrane. The catalysed reaction is nitrate + a quinol = a quinone + nitrite + H2O. The alpha chain is the actual site of nitrate reduction. In Bacillus subtilis (strain 168), this protein is Nitrate reductase alpha chain (narG).